The chain runs to 143 residues: Large ribosomal subunit protein uL11 (143 aa).

Belongs to the universal ribosomal protein uL11 family. Part of the ribosomal stalk of the 50S ribosomal subunit. Interacts with L10 and the large rRNA to form the base of the stalk. L10 forms an elongated spine to which L12 dimers bind in a sequential fashion forming a multimeric L10(L12)X complex. One or more lysine residues are methylated.

In terms of biological role, forms part of the ribosomal stalk which helps the ribosome interact with GTP-bound translation factors. The protein is Large ribosomal subunit protein uL11 of Pseudomonas savastanoi pv. phaseolicola (strain 1448A / Race 6) (Pseudomonas syringae pv. phaseolicola (strain 1448A / Race 6)).